The sequence spans 240 residues: uncharacterized protein (240 aa).

2 helical membrane passes run 16-36 (AVFF…YFIP) and 67-87 (FITA…VIAM).

Its subcellular location is the cell membrane. This is an uncharacterized protein from Bacillus subtilis (strain 168).